The primary structure comprises 86 residues: UPF0125 protein bbp_234 (86 aa).

The protein belongs to the UPF0125 (RnfH) family.

The polypeptide is UPF0125 protein bbp_234 (Buchnera aphidicola subsp. Baizongia pistaciae (strain Bp)).